The following is a 264-amino-acid chain: Indole-3-glycerol phosphate synthase (264 aa).

Belongs to the TrpC family.

It carries out the reaction 1-(2-carboxyphenylamino)-1-deoxy-D-ribulose 5-phosphate + H(+) = (1S,2R)-1-C-(indol-3-yl)glycerol 3-phosphate + CO2 + H2O. Its pathway is amino-acid biosynthesis; L-tryptophan biosynthesis; L-tryptophan from chorismate: step 4/5. This Azoarcus sp. (strain BH72) protein is Indole-3-glycerol phosphate synthase.